Consider the following 179-residue polypeptide: Natural killer cells antigen CD94 (179 aa).

Over 1–10 (MAVFKTTLWR) the chain is Cytoplasmic. Residues 11–31 (LISGTLGIICLSLMATLGILL) form a helical; Signal-anchor for type II membrane protein membrane-spanning segment. Over 32–179 (KNSFTKLSVE…NRYICKQQLI (148 aa)) the chain is Extracellular. 2 cysteine pairs are disulfide-bonded: C58–C70 and C61–C72. One can recognise a C-type lectin domain in the interval 68-175 (YRCNCYFISS…CETKNRYICK (108 aa)). N-linked (GlcNAc...) asparagine glycans are attached at residues N83 and N132. Disulfide bonds link C89–C174 and C152–C166.

In terms of assembly, can form disulfide-bonded heterodimer with NKG2 family members KLRC1 and KLRC2. KLRD1-KLRC1 heterodimer interacts with peptide-bound MHC-E-B2M heterotrimeric complex. KLRD1 plays a prominent role in directly interacting with MHC-E. KLRD1-KLRC1 interacts with much higher affinity with peptide-bound MHC-E-B2M than KLRD1-KLRC2. Interacts with the adapter protein TYROBP/DAP12; this interaction is required for cell surface expression and cell activation. Natural killer cells.

The protein resides in the cell membrane. Immune receptor involved in self-nonself discrimination. In complex with KLRC1 or KLRC2 on cytotoxic and regulatory lymphocyte subsets, recognizes non-classical major histocompatibility (MHC) class Ib molecule MHC-E loaded with self-peptides derived from the signal sequence of classical MHC class Ia and non-classical MHC class Ib molecules. Enables cytotoxic cells to monitor the expression of MHC class I molecules in healthy cells and to tolerate self. Primarily functions as a ligand binding subunit as it lacks the capacity to signal. Functionally, KLRD1-KLRC1 acts as an immune inhibitory receptor. Key inhibitory receptor on natural killer (NK) cells that regulates their activation and effector functions. Dominantly counteracts T cell receptor signaling on a subset of memory/effector CD8-positive T cells as part of an antigen-driven response to avoid autoimmunity. On intraepithelial CD8-positive gamma-delta regulatory T cells triggers TGFB1 secretion, which in turn limits the cytotoxic programming of intraepithelial CD8-positive alpha-beta T cells, distinguishing harmless from pathogenic antigens. In MHC-E-rich tumor microenvironment, acts as an immune inhibitory checkpoint and may contribute to progressive loss of effector functions of NK cells and tumor-specific T cells, a state known as cell exhaustion. Upon MHC-E-peptide binding, transmits intracellular signals through KLRC1 immunoreceptor tyrosine-based inhibition motifs (ITIMs) by recruiting INPP5D/SHIP-1 and INPPL1/SHIP-2 tyrosine phosphatases to ITIMs, and ultimately opposing signals transmitted by activating receptors through dephosphorylation of proximal signaling molecules. Its function is as follows. KLRD1-KLRC2 acts as an immune activating receptor. On cytotoxic lymphocyte subsets recognizes MHC-E loaded with signal sequence-derived peptides from non-classical MHC class Ib MHC-G molecules, likely playing a role in the generation and effector functions of adaptive NK cells and in maternal-fetal tolerance during pregnancy. Regulates the effector functions of terminally differentiated cytotoxic lymphocyte subsets, and in particular may play a role in adaptive NK cell response to viral infection. Upon MHC-E-peptide binding, transmits intracellular signals via the adapter protein TYROBP/DAP12, triggering the phosphorylation of proximal signaling molecules and cell activation. The protein is Natural killer cells antigen CD94 (KLRD1) of Macaca mulatta (Rhesus macaque).